The chain runs to 902 residues: Protein translocase subunit SecA (902 aa).

ATP is bound by residues glutamine 89, 107-111, and aspartate 502; that span reads GEGKT. Residues cysteine 884, cysteine 886, cysteine 895, and histidine 896 each contribute to the Zn(2+) site.

It belongs to the SecA family. Monomer and homodimer. Part of the essential Sec protein translocation apparatus which comprises SecA, SecYEG and auxiliary proteins SecDF-YajC and YidC. The cofactor is Zn(2+).

The protein resides in the cell inner membrane. The protein localises to the cytoplasm. It catalyses the reaction ATP + H2O + cellular proteinSide 1 = ADP + phosphate + cellular proteinSide 2.. Part of the Sec protein translocase complex. Interacts with the SecYEG preprotein conducting channel. Has a central role in coupling the hydrolysis of ATP to the transfer of proteins into and across the cell membrane, serving both as a receptor for the preprotein-SecB complex and as an ATP-driven molecular motor driving the stepwise translocation of polypeptide chains across the membrane. In Agrobacterium fabrum (strain C58 / ATCC 33970) (Agrobacterium tumefaciens (strain C58)), this protein is Protein translocase subunit SecA.